The sequence spans 342 residues: L-lysine 2,3-aminomutase (342 aa).

Positions 106–329 (HKYQNRALLL…PRLAREIGGE (224 aa)) constitute a Radical SAM core domain. Residues Cys-120, Cys-124, and Cys-127 each contribute to the [4Fe-4S] cluster site. Lys-332 is modified (N6-(pyridoxal phosphate)lysine).

This sequence belongs to the radical SAM superfamily. KamA family. The cofactor is [4Fe-4S] cluster. It depends on pyridoxal 5'-phosphate as a cofactor.

The catalysed reaction is L-lysine = D-beta-lysine. In terms of biological role, with EpmA is involved in the beta-lysylation step of the post-translational modification of translation elongation factor P (EF-P) on 'Lys-34'. EpmB appears to act before EpmA. Displays lysine 2,3-aminomutase activity, producing (R)-beta-lysine from (S)-alpha-lysine (L-lysine). In Salmonella typhimurium (strain LT2 / SGSC1412 / ATCC 700720), this protein is L-lysine 2,3-aminomutase (epmB).